Reading from the N-terminus, the 242-residue chain is Serine hydrolase cnsH (242 aa).

Residues serine 56, aspartate 138, and histidine 216 each act as charge relay system in the active site.

The protein belongs to the AB hydrolase 3 family.

It functions in the pathway alkaloid biosynthesis. In terms of biological role, serine hydrolase; part of the gene cluster that mediates the biosynthesis of communesins, a prominent class of indole alkaloids with great potential as pharmaceuticals. Communesins are biosynthesized by the coupling of tryptamine and aurantioclavine, two building blocks derived from L-tryptophan. The L-tryptophan decarboxylase cnsB converts L-tryptophan to tryptamine, whereas the tryptophan dimethylallyltransferase cnsF converts L-tryptophan to 4-dimethylallyl tryptophan which is further transformed to aurantioclavine by the aurantioclavine synthase cnsA, probably aided by the catalase cnsD. The cytochrome P450 monooxygenase cnsC catalyzes the heterodimeric coupling between the two different indole moieties, tryptamine and aurantioclavine, to construct vicinal quaternary stereocenters and yield the heptacyclic communesin scaffold. The O-methyltransferase cnsE then methylates the communesin scaffold to produce communesin K, the simplest characterized communesin that contains the heptacyclic core. The dioxygenase cnsJ converts communesin K into communesin I. Acylation to introduce the hexadienyl group at position N16 of communesin I by the acyltransferase cnsK leads to the production of communesin B. The hexadienyl group is produced by the highly reducing polyketide synthase cnsI, before being hydrolytically removed from cnsI by the serine hydrolase cnsH, converted into hexadienyl-CoA by the CoA ligase cnsG, and then transferred to communesin I by cnsK. Surprisingly, cnsK may also be a promiscuous acyltransferase that can tolerate a range of acyl groups, including acetyl-, propionyl-, and butyryl-CoA, which lead to communesins A, G and H respectively. The roles of the alpha-ketoglutarate-dependent dioxygenases cnsM and cnsP have still to be determined. This is Serine hydrolase cnsH from Penicillium expansum (Blue mold rot fungus).